A 448-amino-acid polypeptide reads, in one-letter code: Phosphoglucosamine mutase (448 aa).

Serine 102 serves as the catalytic Phosphoserine intermediate. Serine 102, aspartate 243, aspartate 245, and aspartate 247 together coordinate Mg(2+). At serine 102 the chain carries Phosphoserine.

It belongs to the phosphohexose mutase family. It depends on Mg(2+) as a cofactor. Post-translationally, activated by phosphorylation.

It carries out the reaction alpha-D-glucosamine 1-phosphate = D-glucosamine 6-phosphate. In terms of biological role, catalyzes the conversion of glucosamine-6-phosphate to glucosamine-1-phosphate. This is Phosphoglucosamine mutase from Mycobacterium bovis (strain ATCC BAA-935 / AF2122/97).